The sequence spans 181 residues: Cytidylate kinase (181 aa).

Residue 12 to 20 participates in ATP binding; that stretch reads GLAGSGTTT.

It belongs to the cytidylate kinase family. Type 2 subfamily.

It localises to the cytoplasm. The catalysed reaction is CMP + ATP = CDP + ADP. It catalyses the reaction dCMP + ATP = dCDP + ADP. The polypeptide is Cytidylate kinase (cmk) (Pyrococcus abyssi (strain GE5 / Orsay)).